A 100-amino-acid chain; its full sequence is NADH-quinone oxidoreductase subunit K (100 aa).

3 consecutive transmembrane segments (helical) span residues 3-23 (PTSY…VGVI), 29-49 (LVLF…LVTF), and 60-80 (IVVF…LALL).

This sequence belongs to the complex I subunit 4L family. In terms of assembly, NDH-1 is composed of 14 different subunits. Subunits NuoA, H, J, K, L, M, N constitute the membrane sector of the complex.

It localises to the cell membrane. The enzyme catalyses a quinone + NADH + 5 H(+)(in) = a quinol + NAD(+) + 4 H(+)(out). NDH-1 shuttles electrons from NADH, via FMN and iron-sulfur (Fe-S) centers, to quinones in the respiratory chain. The immediate electron acceptor for the enzyme in this species is believed to be ubiquinone. Couples the redox reaction to proton translocation (for every two electrons transferred, four hydrogen ions are translocated across the cytoplasmic membrane), and thus conserves the redox energy in a proton gradient. The protein is NADH-quinone oxidoreductase subunit K of Roseiflexus castenholzii (strain DSM 13941 / HLO8).